The following is a 283-amino-acid chain: Tetraspanin-33 (283 aa).

The Cytoplasmic segment spans residues 1-24 (MARRPRAPAASGEEFSFVSPLVKY). The chain crosses the membrane as a helical span at residues 25 to 45 (LLFFFNMLFWVISMVMVAVGV). Topologically, residues 46 to 64 (YARLMKHAEAALACLAVDP) are extracellular. Residues 65–85 (AILLIVVGVLMFLLTFCGCIG) traverse the membrane as a helical segment. Residues 86–96 (SLRENICLLQT) are Cytoplasmic-facing. A helical membrane pass occupies residues 97 to 117 (FSLCLTAVFLLQLAAGILGFV). At 118–235 (FSDKARGKVS…DKLVNWIHSN (118 aa)) the chain is on the extracellular side. 4 cysteine pairs are disulfide-bonded: Cys-156–Cys-224, Cys-157–Cys-189, Cys-173–Cys-183, and Cys-190–Cys-203. Asn-172 carries an N-linked (GlcNAc...) asparagine glycan. The chain crosses the membrane as a helical span at residues 236-256 (LFLLGGVALGLAIPQLVGILL). The Cytoplasmic portion of the chain corresponds to 257–283 (SQILVNQIKDQIKLQLYNQQHRADPWY).

Belongs to the tetraspanin (TM4SF) family. In terms of assembly, homodimer; disulfide-linked. Interacts (via extracellular domain) with ADAM10 (via extracellular domain). Interacts (via cytoplasmic domain) with PLEKHA7 (via WW domains); the interaction is dependent on PDZD11 being bound to PLEKHA7 and facilitates the docking of ADAM10 to zonula adherens. In terms of tissue distribution, predominantly expressed in erythroblasts.

The protein resides in the cell membrane. It is found in the cell junction. It localises to the adherens junction. Its subcellular location is the cytoplasm. Functionally, part of TspanC8 subgroup, composed of 6 members that interact with the transmembrane metalloprotease ADAM10. This interaction is required for ADAM10 exit from the endoplasmic reticulum and for enzymatic maturation and trafficking to the cell surface as well as substrate specificity. Different TspanC8/ADAM10 complexes have distinct substrates. Plays an important role in normal erythropoiesis. It has a role in the differentiation of erythroid progenitors. Negatively regulates ligand-induced Notch activity probably by regulating ADAM10 activity. Mediates docking of ADAM10 to zonula adherens by interacting with ADAM10 and, in a PDZD11-dependent manner, with the zonula adherens protein PLEKHA7. This Homo sapiens (Human) protein is Tetraspanin-33.